The sequence spans 396 residues: Acetate kinase (396 aa).

N7 contributes to the Mg(2+) binding site. K14 contacts ATP. R89 serves as a coordination point for substrate. Catalysis depends on D146, which acts as the Proton donor/acceptor. ATP is bound by residues 206–210 (HLGNG), 280–282 (DLR), and 328–332 (GIGEN). Residue E382 participates in Mg(2+) binding.

The protein belongs to the acetokinase family. In terms of assembly, homodimer. It depends on Mg(2+) as a cofactor. The cofactor is Mn(2+).

Its subcellular location is the cytoplasm. The enzyme catalyses acetate + ATP = acetyl phosphate + ADP. The protein operates within metabolic intermediate biosynthesis; acetyl-CoA biosynthesis; acetyl-CoA from acetate: step 1/2. Catalyzes the formation of acetyl phosphate from acetate and ATP. Can also catalyze the reverse reaction. The polypeptide is Acetate kinase (Maridesulfovibrio salexigens (strain ATCC 14822 / DSM 2638 / NCIMB 8403 / VKM B-1763) (Desulfovibrio salexigens)).